A 122-amino-acid chain; its full sequence is MIQQESRLKVADNSGAREVLCIKVLGGSGRKIANIGDVIVCSVKEATPGGVVKKGDVVKAVIVRSKSGVRRNDGSYIKFDENAAVIVRDDKSPRGTRIFGPVARELRDNQFMKIVSLAPEVL.

Belongs to the universal ribosomal protein uL14 family. As to quaternary structure, part of the 50S ribosomal subunit. Forms a cluster with proteins L3 and L19. In the 70S ribosome, L14 and L19 interact and together make contacts with the 16S rRNA in bridges B5 and B8.

In terms of biological role, binds to 23S rRNA. Forms part of two intersubunit bridges in the 70S ribosome. The polypeptide is Large ribosomal subunit protein uL14 (Shouchella clausii (strain KSM-K16) (Alkalihalobacillus clausii)).